The sequence spans 488 residues: Glutamyl-tRNA(Gln) amidotransferase subunit A (488 aa).

Active-site charge relay system residues include lysine 77 and serine 152. Serine 176 serves as the catalytic Acyl-ester intermediate.

The protein belongs to the amidase family. GatA subfamily. In terms of assembly, heterotrimer of A, B and C subunits.

It carries out the reaction L-glutamyl-tRNA(Gln) + L-glutamine + ATP + H2O = L-glutaminyl-tRNA(Gln) + L-glutamate + ADP + phosphate + H(+). In terms of biological role, allows the formation of correctly charged Gln-tRNA(Gln) through the transamidation of misacylated Glu-tRNA(Gln) in organisms which lack glutaminyl-tRNA synthetase. The reaction takes place in the presence of glutamine and ATP through an activated gamma-phospho-Glu-tRNA(Gln). The sequence is that of Glutamyl-tRNA(Gln) amidotransferase subunit A from Streptococcus pyogenes serotype M49 (strain NZ131).